Here is a 791-residue protein sequence, read N- to C-terminus: Probable phosphoketolase (791 aa).

It belongs to the XFP family. It depends on thiamine diphosphate as a cofactor.

This Pseudomonas putida (strain ATCC 700007 / DSM 6899 / JCM 31910 / BCRC 17059 / LMG 24140 / F1) protein is Probable phosphoketolase.